The chain runs to 194 residues: dTTP/UTP pyrophosphatase (194 aa).

D77 serves as the catalytic Proton acceptor.

It belongs to the Maf family. YhdE subfamily. It depends on a divalent metal cation as a cofactor.

It is found in the cytoplasm. The enzyme catalyses dTTP + H2O = dTMP + diphosphate + H(+). It catalyses the reaction UTP + H2O = UMP + diphosphate + H(+). Nucleoside triphosphate pyrophosphatase that hydrolyzes dTTP and UTP. May have a dual role in cell division arrest and in preventing the incorporation of modified nucleotides into cellular nucleic acids. The protein is dTTP/UTP pyrophosphatase of Flavobacterium johnsoniae (strain ATCC 17061 / DSM 2064 / JCM 8514 / BCRC 14874 / CCUG 350202 / NBRC 14942 / NCIMB 11054 / UW101) (Cytophaga johnsonae).